We begin with the raw amino-acid sequence, 474 residues long: ATP synthase subunit beta (474 aa).

155–162 serves as a coordination point for ATP; it reads GGAGVGKT.

The protein belongs to the ATPase alpha/beta chains family. In terms of assembly, F-type ATPases have 2 components, CF(1) - the catalytic core - and CF(0) - the membrane proton channel. CF(1) has five subunits: alpha(3), beta(3), gamma(1), delta(1), epsilon(1). CF(0) has three main subunits: a(1), b(2) and c(9-12). The alpha and beta chains form an alternating ring which encloses part of the gamma chain. CF(1) is attached to CF(0) by a central stalk formed by the gamma and epsilon chains, while a peripheral stalk is formed by the delta and b chains.

Its subcellular location is the cell inner membrane. The catalysed reaction is ATP + H2O + 4 H(+)(in) = ADP + phosphate + 5 H(+)(out). Produces ATP from ADP in the presence of a proton gradient across the membrane. The catalytic sites are hosted primarily by the beta subunits. The chain is ATP synthase subunit beta from Sorangium cellulosum (strain So ce56) (Polyangium cellulosum (strain So ce56)).